A 256-amino-acid polypeptide reads, in one-letter code: Probable ATP-dependent transporter slr0075 (256 aa).

The 245-residue stretch at Leu6 to Glu250 folds into the ABC transporter domain. Gly38–Ser45 provides a ligand contact to ATP.

It belongs to the ABC transporter superfamily. Ycf16 family.

The protein is Probable ATP-dependent transporter slr0075 of Synechocystis sp. (strain ATCC 27184 / PCC 6803 / Kazusa).